Reading from the N-terminus, the 469-residue chain is Glutamate--tRNA ligase (469 aa).

Residues 11-21 carry the 'HIGH' region motif; sequence PSPTGFIHLGN. A 'KMSKS' region motif is present at residues 243-247; it reads KMSKR. K246 provides a ligand contact to ATP.

It belongs to the class-I aminoacyl-tRNA synthetase family. Glutamate--tRNA ligase type 1 subfamily. As to quaternary structure, monomer.

It is found in the cytoplasm. It carries out the reaction tRNA(Glu) + L-glutamate + ATP = L-glutamyl-tRNA(Glu) + AMP + diphosphate. Its function is as follows. Catalyzes the attachment of glutamate to tRNA(Glu) in a two-step reaction: glutamate is first activated by ATP to form Glu-AMP and then transferred to the acceptor end of tRNA(Glu). This Burkholderia lata (strain ATCC 17760 / DSM 23089 / LMG 22485 / NCIMB 9086 / R18194 / 383) protein is Glutamate--tRNA ligase.